The sequence spans 315 residues: Ester hydrolase C11orf54 homolog (315 aa).

Zn(2+)-binding residues include His-266, His-268, and His-278.

Monomer. It depends on Zn(2+) as a cofactor.

Its subcellular location is the nucleus. It is found in the cytoplasm. Functionally, exhibits ester hydrolase activity on the substrate p-nitrophenyl acetate, in vitro. Regulates DNA damage and repair by regulating HIF1A degradation via chaperone-mediated autophagy (CMA). The polypeptide is Ester hydrolase C11orf54 homolog (Rattus norvegicus (Rat)).